A 557-amino-acid polypeptide reads, in one-letter code: MAPRRRRHTRIAGLRVVGTATLVAATTLTACSGSAAAQIDYVVDGALVTYNTNTVIGAASAGAQAFARTLTGFGYHGPDGQVVADRDFGTVSVVEGSPLILDYQISDDAVYSDGRPVTCDDLVLAWAAQSGRFPGFDAATQAGYVDIANIECTAGQKKARVSFIPDRSVVDHSQLFTATSLMPSHVIADQLHIDVTAALLSNNVSAVEQIARLWNSTWDLKPGRSHDEVRSRFPSSGPYKIESVLDDGAVVLVANDRWWGTKAITKRITVWPQGADIQDRVNNRSVDVVDVAAGSSGSLVTPDSYQRTDYPSAGIEQLIFAPQGSLAQSRTRRALALCVPRDAIARDAGVPIANSRLSPATDDALTDADGAAEARQFGRVDPAAARDALGGTPLTVRIGYGRPNARLAATIGTIADACAPAGITVSDVTVDTPGPQALRDGKIDVLLASTGGATGSGSSGSSAMDAYDLHSGNGNNLSGYANAQIDGIISALAVSADPAERARLLAEAAPVLWDEMPTLPLYRQQRTLLMSTKMYAVSRNPTRWGAGWNMDRWALAR.

An N-terminal signal peptide occupies residues 1-30 (MAPRRRRHTRIAGLRVVGTATLVAATTLTA). A lipid anchor (N-palmitoyl cysteine) is attached at C31. The S-diacylglycerol cysteine moiety is linked to residue C31.

The protein to M.bovis Mb2616c and M.leprae ML0489.

It is found in the cell membrane. This is an uncharacterized protein from Mycobacterium tuberculosis (strain CDC 1551 / Oshkosh).